A 266-amino-acid polypeptide reads, in one-letter code: Glucose 1-dehydrogenase (266 aa).

Residue 15-39 participates in NADP(+) binding; the sequence is LVTGASQGIGEATALRFAEEGAQVA. Ser149 contributes to the substrate binding site. Tyr162 functions as the Proton acceptor in the catalytic mechanism.

This sequence belongs to the short-chain dehydrogenases/reductases (SDR) family. In terms of assembly, homotetramer or homooctamer.

The enzyme catalyses D-glucose + NADP(+) = D-glucono-1,5-lactone + NADPH + H(+). Functionally, oxidizes both D-glucose and D-mannose, but is 15 times more catalytically efficient with mannose. Strictly dependent on NADP. In Gluconobacter oxydans (strain 621H) (Gluconobacter suboxydans), this protein is Glucose 1-dehydrogenase.